A 269-amino-acid chain; its full sequence is Tryptophan synthase alpha chain (269 aa).

Catalysis depends on proton acceptor residues glutamate 49 and aspartate 60.

The protein belongs to the TrpA family. As to quaternary structure, tetramer of two alpha and two beta chains.

The catalysed reaction is (1S,2R)-1-C-(indol-3-yl)glycerol 3-phosphate + L-serine = D-glyceraldehyde 3-phosphate + L-tryptophan + H2O. The protein operates within amino-acid biosynthesis; L-tryptophan biosynthesis; L-tryptophan from chorismate: step 5/5. Its function is as follows. The alpha subunit is responsible for the aldol cleavage of indoleglycerol phosphate to indole and glyceraldehyde 3-phosphate. The protein is Tryptophan synthase alpha chain of Proteus mirabilis (strain HI4320).